Consider the following 368-residue polypeptide: Glutamate 5-kinase 1 (368 aa).

Lysine 12 contributes to the ATP binding site. 3 residues coordinate substrate: serine 52, aspartate 135, and asparagine 147. Residues 167-168 and 209-215 contribute to the ATP site; these read SD and TGGMKTK. One can recognise a PUA domain in the interval 274 to 348; that stretch reads QGEVVVDGSF…DNEQSEFSEK (75 aa).

This sequence belongs to the glutamate 5-kinase family.

It is found in the cytoplasm. The enzyme catalyses L-glutamate + ATP = L-glutamyl 5-phosphate + ADP. The protein operates within amino-acid biosynthesis; L-proline biosynthesis; L-glutamate 5-semialdehyde from L-glutamate: step 1/2. Its function is as follows. Catalyzes the transfer of a phosphate group to glutamate to form L-glutamate 5-phosphate. In Pseudoalteromonas translucida (strain TAC 125), this protein is Glutamate 5-kinase 1.